A 66-amino-acid chain; its full sequence is Large ribosomal subunit protein bL35 (66 aa).

Residues 1–16 show a composition bias toward basic residues; it reads MPKQKTHRASAKRFKR. The tract at residues 1–20 is disordered; the sequence is MPKQKTHRASAKRFKRTGNG.

Belongs to the bacterial ribosomal protein bL35 family.

In Lactococcus lactis subsp. lactis (strain IL1403) (Streptococcus lactis), this protein is Large ribosomal subunit protein bL35.